The following is a 258-amino-acid chain: Transmembrane O-methyltransferase homolog (258 aa).

Residues E104, 106 to 107 (GT), S112, E130, and S160 contribute to the S-adenosyl-L-methionine site.

The protein belongs to the class I-like SAM-binding methyltransferase superfamily. Cation-dependent O-methyltransferase family. As to quaternary structure, interacts with LHFPL5, PCDH15, TMC1, TMC2 and TMIE. The interaction of TOMT with TMC1 and TMC2 is required for the transportation of TMC1/2 into the stereocilia of hair cells. Interacts directly with TMC1. In terms of tissue distribution, widely expressed with high levels in outer and inner hair cells of the cochlea and vestibule.

The protein resides in the cytoplasm. Its subcellular location is the endoplasmic reticulum. The catalysed reaction is a catechol + S-adenosyl-L-methionine = a guaiacol + S-adenosyl-L-homocysteine + H(+). Functionally, catalyzes the O-methylation, and thereby the inactivation, of catecholamine neurotransmitters and catechol hormones. Required for auditory function. Component of the cochlear hair cell's mechanotransduction (MET) machinery. Involved in the assembly of the asymmetric tip-link MET complex. Required for transportation of TMC1 and TMC2 proteins into the mechanically sensitive stereocilia of the hair cells. The function in MET is independent of the enzymatic activity. The chain is Transmembrane O-methyltransferase homolog from Mus musculus (Mouse).